The chain runs to 312 residues: Probable N-glycosylase/DNA lyase (312 aa).

Positions 1–22 are disordered; it reads MRIPVGDFDLEMTQRSGQTSQP. The span at 13 to 22 shows a compositional bias: polar residues; the sequence is TQRSGQTSQP. Lysine 235 is an active-site residue.

This sequence belongs to the type-1 OGG1 family.

The enzyme catalyses 2'-deoxyribonucleotide-(2'-deoxyribose 5'-phosphate)-2'-deoxyribonucleotide-DNA = a 3'-end 2'-deoxyribonucleotide-(2,3-dehydro-2,3-deoxyribose 5'-phosphate)-DNA + a 5'-end 5'-phospho-2'-deoxyribonucleoside-DNA + H(+). In terms of biological role, DNA repair enzyme that incises DNA at 8-oxoG residues. Excises 7,8-dihydro-8-oxoguanine and 2,6-diamino-4-hydroxy-5-N-methylformamidopyrimidine (FAPY) from damaged DNA. Has a beta-lyase activity that nicks DNA 3' to the lesion. This Methanothermobacter thermautotrophicus (strain ATCC 29096 / DSM 1053 / JCM 10044 / NBRC 100330 / Delta H) (Methanobacterium thermoautotrophicum) protein is Probable N-glycosylase/DNA lyase.